A 364-amino-acid chain; its full sequence is Anthranilate phosphoribosyltransferase 1 (364 aa).

Residues Gly-102, 105-106, Thr-110, 112-115, 130-138, and Ser-142 contribute to the 5-phospho-alpha-D-ribose 1-diphosphate site; these read GD, NIST, and KHGNRSASS. Gly-102 serves as a coordination point for anthranilate. Position 114 (Ser-114) interacts with Mg(2+). Residue Asn-133 coordinates anthranilate. Arg-188 contributes to the anthranilate binding site. The Mg(2+) site is built by Asp-247 and Glu-248.

Belongs to the anthranilate phosphoribosyltransferase family. In terms of assembly, homodimer. Mg(2+) is required as a cofactor.

It carries out the reaction N-(5-phospho-beta-D-ribosyl)anthranilate + diphosphate = 5-phospho-alpha-D-ribose 1-diphosphate + anthranilate. It functions in the pathway amino-acid biosynthesis; L-tryptophan biosynthesis; L-tryptophan from chorismate: step 2/5. Catalyzes the transfer of the phosphoribosyl group of 5-phosphorylribose-1-pyrophosphate (PRPP) to anthranilate to yield N-(5'-phosphoribosyl)-anthranilate (PRA). This chain is Anthranilate phosphoribosyltransferase 1, found in Nostoc sp. (strain PCC 7120 / SAG 25.82 / UTEX 2576).